The primary structure comprises 196 residues: MLTIGVLGLQGAVREHIRSIEACGSKGVVIKRPEQLDDIDGLILPGGESTTMRRLMDTYHFMEPLREFAAQGKPMFGTCAGLIILAKEIAGTDNAHLGLLNVVVERNSFGRQVDSFEADLTIKGLDEPFTGVFIRAPHILEAGEDVEVLCEHNGRIVAAKQGNFLGCSFHPELTDDHRVTELFVKMAEKHKQETAV.

47–49 provides a ligand contact to L-glutamine; the sequence is GES. The active-site Nucleophile is the C79. L-glutamine is bound by residues R106 and 134-135; that span reads IR. Residues H170 and E172 each act as charge relay system in the active site.

Belongs to the glutaminase PdxT/SNO family. In terms of assembly, in the presence of PdxS, forms a dodecamer of heterodimers. Only shows activity in the heterodimer.

The enzyme catalyses aldehydo-D-ribose 5-phosphate + D-glyceraldehyde 3-phosphate + L-glutamine = pyridoxal 5'-phosphate + L-glutamate + phosphate + 3 H2O + H(+). It catalyses the reaction L-glutamine + H2O = L-glutamate + NH4(+). It participates in cofactor biosynthesis; pyridoxal 5'-phosphate biosynthesis. Functionally, catalyzes the hydrolysis of glutamine to glutamate and ammonia as part of the biosynthesis of pyridoxal 5'-phosphate. The resulting ammonia molecule is channeled to the active site of PdxS. The protein is Pyridoxal 5'-phosphate synthase subunit PdxT of Bacillus velezensis (strain DSM 23117 / BGSC 10A6 / LMG 26770 / FZB42) (Bacillus amyloliquefaciens subsp. plantarum).